The primary structure comprises 1171 residues: ATP-dependent helicase/deoxyribonuclease subunit B (1171 aa).

A UvrD-like helicase ATP-binding domain is found at 1 to 301 (MSLRFVIGRA…AHLEMHYEAR (301 aa)). 8 to 15 (GRAGSGKS) serves as a coordination point for ATP. Residues 281–587 (MKQPRFHSQA…QFANIPPSLD (307 aa)) form the UvrD-like helicase C-terminal domain. 4 residues coordinate [4Fe-4S] cluster: Cys-805, Cys-1129, Cys-1132, and Cys-1138.

The protein belongs to the helicase family. AddB/RexB type 1 subfamily. In terms of assembly, heterodimer of AddA and AddB. Mg(2+) serves as cofactor. The cofactor is [4Fe-4S] cluster.

Its function is as follows. The heterodimer acts as both an ATP-dependent DNA helicase and an ATP-dependent, dual-direction single-stranded exonuclease. Recognizes the chi site generating a DNA molecule suitable for the initiation of homologous recombination. The AddB subunit has 5' -&gt; 3' nuclease activity but not helicase activity. This chain is ATP-dependent helicase/deoxyribonuclease subunit B, found in Bacillus mycoides (strain KBAB4) (Bacillus weihenstephanensis).